The following is a 226-amino-acid chain: Enolase-phosphatase E1 (226 aa).

2 residues coordinate Mg(2+): Asp9 and Glu11. Substrate is bound by residues 115–116 (SS) and Lys160. Asp185 contacts Mg(2+).

The protein belongs to the HAD-like hydrolase superfamily. MasA/MtnC family. Monomer. Mg(2+) is required as a cofactor.

Its subcellular location is the cytoplasm. It is found in the nucleus. It carries out the reaction 5-methylsulfanyl-2,3-dioxopentyl phosphate + H2O = 1,2-dihydroxy-5-(methylsulfanyl)pent-1-en-3-one + phosphate. The protein operates within amino-acid biosynthesis; L-methionine biosynthesis via salvage pathway; L-methionine from S-methyl-5-thio-alpha-D-ribose 1-phosphate: step 3/6. It participates in amino-acid biosynthesis; L-methionine biosynthesis via salvage pathway; L-methionine from S-methyl-5-thio-alpha-D-ribose 1-phosphate: step 4/6. Bifunctional enzyme that catalyzes the enolization of 2,3-diketo-5-methylthiopentyl-1-phosphate (DK-MTP-1-P) into the intermediate 2-hydroxy-3-keto-5-methylthiopentenyl-1-phosphate (HK-MTPenyl-1-P), which is then dephosphorylated to form the acireductone 1,2-dihydroxy-3-keto-5-methylthiopentene (DHK-MTPene). This is Enolase-phosphatase E1 from Zygosaccharomyces rouxii (strain ATCC 2623 / CBS 732 / NBRC 1130 / NCYC 568 / NRRL Y-229).